The primary structure comprises 649 residues: Solute carrier family 22 member 16 (649 aa).

The helical transmembrane segment at 19–39 threads the bilayer; the sequence is FQIVLYLICAYQSLSCGIHYL. N-linked (GlcNAc...) asparagine glycosylation is found at N65 and N108. 5 helical membrane passes run 156–176, 190–210, 214–234, 244–264, and 268–288; these read MIQP…SYLS, IGVF…SFMI, FLVM…MEII, IHLN…SYLL, and WLYQ…CWML. The N-linked (GlcNAc...) asparagine glycan is linked to N315. A run of 6 helical transmembrane segments spans residues 356-376, 389-409, 417-437, 445-465, 475-495, and 501-521; these read AKMT…YYMF, LYLL…CIWL, TMLL…VMPS, MVAL…YLYT, CLAV…IPFT, and VWIF…GLLS. Residues 530 to 544 show a composition bias toward polar residues; that stretch reads TPMKSTWETTEQQVP. Disordered regions lie at residues 530-560 and 579-649; these read TPMK…SFER and SPDA…LGGF.

Belongs to the major facilitator (TC 2.A.1) superfamily. Organic cation transporter (TC 2.A.1.19) family.

The protein localises to the cell membrane. The enzyme catalyses (R)-carnitine(in) = (R)-carnitine(out). The catalysed reaction is spermidine(in) = spermidine(out). Functionally, facilitative organic cation transporter that mediates the transport of carnitine as well as the polyamine spermidine. Mediates the partially Na(+)-dependent bidirectional transport of carnitine. May mediate L-carnitine secretion from testis epididymal epithelium into the lumen which is involved in the maturation of spermatozoa. This is Solute carrier family 22 member 16 from Mus musculus (Mouse).